Consider the following 244-residue polypeptide: MAVISMKQLLEAGVHFGHQTRRWNPKMAKYIFTERNGIYIIDLQKTVKKVDEAYNFIREVASEGGNVLFVGTKKQAQDTVKEEAIRAGQYFINERWLGGTLTNFSTIKKRINRLKQLEKMEENGTFEVLPKKEVIILKKEMTRLEKFLGGIKDMPGVPDALFIVDPRKERIAIAEAHKLNIPIVAIVDTNCDPDEIDYVIPANDDAIRAVKLLTGKMADAILEVKQGEDNVAPETTEEVVADAE.

This sequence belongs to the universal ribosomal protein uS2 family.

The polypeptide is Small ribosomal subunit protein uS2 (Exiguobacterium sibiricum (strain DSM 17290 / CCUG 55495 / CIP 109462 / JCM 13490 / 255-15)).